The primary structure comprises 334 residues: Protein-glutamate methylesterase FrzG (334 aa).

The 188-residue stretch at 147 to 334 folds into the CheB-type methylesterase domain; the sequence is PYPLVAIAAS…AALMQWVDVC (188 aa). Active-site residues include Ser156, His183, and Asp276.

The catalysed reaction is [protein]-L-glutamate 5-O-methyl ester + H2O = L-glutamyl-[protein] + methanol + H(+). Its function is as follows. Probable methylesterase. Required for the normal aggregation of M.xanthus cells during fruiting body formation. It is also a component of a sensory transduction pathway that controls the frequency at which cells reverse their gliding direction. It may remove the methyl group from the gamma-glutamyl methyl ester residues in FrzCD. This Myxococcus xanthus protein is Protein-glutamate methylesterase FrzG (frzG).